Consider the following 90-residue polypeptide: Large ribosomal subunit protein eL34 (90 aa).

Zn(2+)-binding residues include Cys-36, Cys-39, Cys-72, and Cys-75. The tract at residues 41 to 72 (RPLNGVPRGRPSELRKLPKTKKRPERPYPNLC) is disordered.

This sequence belongs to the eukaryotic ribosomal protein eL34 family. In terms of assembly, part of the 50S ribosomal subunit. The cofactor is Zn(2+).

The protein is Large ribosomal subunit protein eL34 of Thermococcus kodakarensis (strain ATCC BAA-918 / JCM 12380 / KOD1) (Pyrococcus kodakaraensis (strain KOD1)).